We begin with the raw amino-acid sequence, 321 residues long: Glucokinase (321 aa).

Position 8-13 (8-13 (GDVGGT)) interacts with ATP.

This sequence belongs to the bacterial glucokinase family.

The protein resides in the cytoplasm. It carries out the reaction D-glucose + ATP = D-glucose 6-phosphate + ADP + H(+). This chain is Glucokinase, found in Salmonella arizonae (strain ATCC BAA-731 / CDC346-86 / RSK2980).